The following is a 152-amino-acid chain: 3-hydroxyacyl-[acyl-carrier-protein] dehydratase FabZ (152 aa).

His-57 is an active-site residue.

The protein belongs to the thioester dehydratase family. FabZ subfamily.

Its subcellular location is the cytoplasm. The enzyme catalyses a (3R)-hydroxyacyl-[ACP] = a (2E)-enoyl-[ACP] + H2O. Functionally, involved in unsaturated fatty acids biosynthesis. Catalyzes the dehydration of short chain beta-hydroxyacyl-ACPs and long chain saturated and unsaturated beta-hydroxyacyl-ACPs. The polypeptide is 3-hydroxyacyl-[acyl-carrier-protein] dehydratase FabZ (Bradyrhizobium sp. (strain ORS 278)).